Here is a 198-residue protein sequence, read N- to C-terminus: Holliday junction branch migration complex subunit RuvA (198 aa).

A domain I region spans residues 1–63 (MYDYIKGQLT…EDAQLLFGFH (63 aa)). The interval 64 to 142 (SEEEKDVFLK…EAPKEESSKP (79 aa)) is domain II. Residues 143–147 (PKAKQ) form a flexible linker region. Positions 148-198 (QGNEQLDEAVEALLALGYKATELKKIRAFFEGTSETAEQYIKSALKMLMKG) are domain III.

The protein belongs to the RuvA family. As to quaternary structure, homotetramer. Forms an RuvA(8)-RuvB(12)-Holliday junction (HJ) complex. HJ DNA is sandwiched between 2 RuvA tetramers; dsDNA enters through RuvA and exits via RuvB. An RuvB hexamer assembles on each DNA strand where it exits the tetramer. Each RuvB hexamer is contacted by two RuvA subunits (via domain III) on 2 adjacent RuvB subunits; this complex drives branch migration. In the full resolvosome a probable DNA-RuvA(4)-RuvB(12)-RuvC(2) complex forms which resolves the HJ.

It localises to the cytoplasm. The RuvA-RuvB-RuvC complex processes Holliday junction (HJ) DNA during genetic recombination and DNA repair, while the RuvA-RuvB complex plays an important role in the rescue of blocked DNA replication forks via replication fork reversal (RFR). RuvA specifically binds to HJ cruciform DNA, conferring on it an open structure. The RuvB hexamer acts as an ATP-dependent pump, pulling dsDNA into and through the RuvAB complex. HJ branch migration allows RuvC to scan DNA until it finds its consensus sequence, where it cleaves and resolves the cruciform DNA. The chain is Holliday junction branch migration complex subunit RuvA from Streptococcus equi subsp. zooepidemicus (strain H70).